A 165-amino-acid chain; its full sequence is Large ribosomal subunit protein eL15 (165 aa).

Residues 126–147 (TSAGRKSRGLGKGHKFHHTIGG) are disordered. The span at 130–143 (RKSRGLGKGHKFHH) shows a compositional bias: basic residues.

It belongs to the eukaryotic ribosomal protein eL15 family. As to quaternary structure, component of the large ribosomal subunit.

The protein resides in the cytoplasm. Its function is as follows. Component of the large ribosomal subunit. The ribosome is a large ribonucleoprotein complex responsible for the synthesis of proteins in the cell. The sequence is that of Large ribosomal subunit protein eL15 (RPL15) from Gallus gallus (Chicken).